A 116-amino-acid chain; its full sequence is Iron-sulfur cluster insertion protein ErpA (116 aa).

C44, C108, and C110 together coordinate iron-sulfur cluster.

The protein belongs to the HesB/IscA family. Homodimer. Iron-sulfur cluster is required as a cofactor.

Its function is as follows. Required for insertion of 4Fe-4S clusters for at least IspG. The chain is Iron-sulfur cluster insertion protein ErpA from Shewanella pealeana (strain ATCC 700345 / ANG-SQ1).